A 734-amino-acid polypeptide reads, in one-letter code: PI-PLC X-box domain-containing protein DDB_G0293730 (734 aa).

Residues 8–70 (IKNILLKIEK…ELNEKLIVEK (63 aa)) are a coiled coil. Residues 440 to 604 (KLKDRKVRNL…CIYDDLVNPL (165 aa)) enclose the PI-PLC X-box domain.

In Dictyostelium discoideum (Social amoeba), this protein is PI-PLC X-box domain-containing protein DDB_G0293730.